We begin with the raw amino-acid sequence, 111 residues long: MGSSSFLVLMVSLTLVTLVAAEGVKGGIEKAGVCPADNVRCFKSDPPQCHTDQDCLGERKCCYLHCGFKCVIPVKKLEEGGNKDEDVSGPCPEPGWEAKSPGSSSTGCPQK.

The first 23 residues, 1–23 (MGSSSFLVLMVSLTLVTLVAAEG), serve as a signal peptide directing secretion. The region spanning 27 to 74 (GIEKAGVCPADNVRCFKSDPPQCHTDQDCLGERKCCYLHCGFKCVIPV) is the WAP domain. Cystine bridges form between Cys-34–Cys-62, Cys-41–Cys-66, Cys-49–Cys-61, and Cys-55–Cys-70. The interval 80-111 (GGNKDEDVSGPCPEPGWEAKSPGSSSTGCPQK) is disordered. A compositionally biased stretch (polar residues) spans 101–111 (PGSSSTGCPQK).

It is found in the secreted. Antibacterial protein. Putative acid-stable proteinase inhibitor. In Chlorocebus aethiops (Green monkey), this protein is WAP four-disulfide core domain protein 12 (WFDC12).